Here is a 352-residue protein sequence, read N- to C-terminus: PDZ and LIM domain protein 2 (352 aa).

Residues 1–84 (MALTVDVAGP…PLRLQLDRSQ (84 aa)) enclose the PDZ domain. Disordered regions lie at residues 67–97 (SKIRQSPSPLRLQLDRSQATSPGQTNGDSSL) and 111–149 (YTESQSSLRSSYSSPTSLSPRAGSPFSPPPSSSSLTGEA). Over residues 81–95 (DRSQATSPGQTNGDS) the composition is skewed to polar residues. Residues 111–135 (YTESQSSLRSSYSSPTSLSPRAGSP) show a composition bias toward low complexity. The residue at position 124 (Ser124) is a Phosphoserine. Thr126 is modified (phosphothreonine). 10 positions are modified to phosphoserine: Ser127, Ser129, Ser134, Ser137, Ser143, Ser161, Ser197, Ser203, Ser213, and Ser266. The interval 170–213 (LSYSGRPGSRQAGLGRAGDSAVLVLPPSPGPRSSRPSMDSEGGS) is disordered. The 61-residue stretch at 284–344 (HTCEKCSTSI…EKHARQRYSA (61 aa)) folds into the LIM zinc-binding domain.

In terms of assembly, interacts with alpha-actinins ACTN1 and ACTN4, FLNA and MYH9. Interacts (via LIM zinc-binding domain) with MKRN2.

The protein resides in the cytoplasm. It localises to the nucleus. The protein localises to the cytoskeleton. Its function is as follows. Probable adapter protein located at the actin cytoskeleton that promotes cell attachment. Necessary for the migratory capacity of epithelial cells. Overexpression enhances cell adhesion to collagen and fibronectin and suppresses anchorage independent growth. May contribute to tumor cell migratory capacity. The protein is PDZ and LIM domain protein 2 (PDLIM2) of Homo sapiens (Human).